The sequence spans 921 residues: GPI ethanolamine phosphate transferase 1 (921 aa).

At 1–9 (MKNNTRFTL) the chain is on the cytoplasmic side. A helical transmembrane segment spans residues 10-30 (IVVGVLFHLLYLWSIFDIYFI). The Lumenal segment spans residues 31-457 (SPLVHGMEQK…TTYNWRFIRT (427 aa)). N-linked (GlcNAc...) asparagine glycosylation is found at N90, N138, N198, N262, and N286. A helical membrane pass occupies residues 458–478 (IVTFGFLGWICYSFMIFLKLF). Residues 479–488 (ILNNSQTTHP) are Cytoplasmic-facing. Residues 489-509 (SILNISIFTSLGLILNYILFY) traverse the membrane as a helical segment. Over 510–516 (QKSPLNF) the chain is Lumenal. Residues 517–537 (YLYLIFPLFFWSKIFSNTAII) traverse the membrane as a helical segment. Topologically, residues 538 to 552 (RDGVNEFFKGISKAE) are cytoplasmic. A helical membrane pass occupies residues 553 to 573 (SVIIGLTIISIYEGIVYGFFH). The Lumenal segment spans residues 574–575 (RW). The helical transmembrane segment at 576–596 (ILSLILVSFAFYPLVCGVTDL) threads the bilayer. Residues 597-599 (FTN) lie on the Cytoplasmic side of the membrane. The chain crosses the membrane as a helical span at residues 600–620 (LLWILTSVGLSSFTLLDAVKI). E621 is a topological domain (lumenal). Residues 622 to 642 (NLQQIQVAGILIVLSSAYAVM) form a helical membrane-spanning segment. The Cytoplasmic portion of the chain corresponds to 643-654 (RLSQDISKYTQH). The chain crosses the membrane as a helical span at residues 655–675 (LLSIQIFLVSGMLHFTSKSVI). Over 676–684 (SLQKREGLP) the chain is Lumenal. Residues 685 to 705 (AFAQVGGWAILVISLTIMPFL) traverse the membrane as a helical segment. Residues 706–728 (HYLKPNNNYQVRLLTIYLTFAPS) are Cytoplasmic-facing. The helical transmembrane segment at 729 to 749 (FIILSISFEALFYFIFTAYIV) threads the bilayer. The Lumenal segment spans residues 750–777 (QWLQIEKNIKVLKDEQKSDSNGIQLLRV). Residues 778 to 798 (AIIGFFLQQIAFFGTGNVASI) traverse the membrane as a helical segment. Residues 799–819 (SSFSLDSVYRLLPVFDPFPMG) lie on the Cytoplasmic side of the membrane. A helical transmembrane segment spans residues 820–840 (ALLMLKLIIPYVLLSCGLGIM). Over 841-849 (NIQLDIKDY) the chain is Lumenal. Residues 850-870 (TISSLIISTSDILSLNFFYLL) traverse the membrane as a helical segment. At 871 to 878 (KTEGSWLD) the chain is on the cytoplasmic side. The helical transmembrane segment at 879–899 (IGVTISNYCLAILSSLFMLIL) threads the bilayer. The Lumenal portion of the chain corresponds to 900 to 921 (EIVGHQLLKNVTRATSSQKKTN). N909 carries an N-linked (GlcNAc...) asparagine glycan.

The protein belongs to the PIGG/PIGN/PIGO family. PIGN subfamily.

Its subcellular location is the endoplasmic reticulum membrane. It functions in the pathway glycolipid biosynthesis; glycosylphosphatidylinositol-anchor biosynthesis. In terms of biological role, ethanolamine phosphate transferase involved in glycosylphosphatidylinositol-anchor biosynthesis. Transfers ethanolamine phosphate to the first alpha-1,4-linked mannose of the glycosylphosphatidylinositol precursor of GPI-anchor. This Candida glabrata (strain ATCC 2001 / BCRC 20586 / JCM 3761 / NBRC 0622 / NRRL Y-65 / CBS 138) (Yeast) protein is GPI ethanolamine phosphate transferase 1 (MCD4).